Consider the following 478-residue polypeptide: Adenosylhomocysteinase (478 aa).

Residues threonine 67, aspartate 144, and glutamate 204 each coordinate substrate. 205–207 (TTT) provides a ligand contact to NAD(+). Residues lysine 234 and aspartate 238 each contribute to the substrate site. NAD(+) is bound by residues asparagine 239, 268–273 (GYGDVG), glutamate 291, asparagine 326, 347–349 (IGH), and asparagine 392.

Belongs to the adenosylhomocysteinase family. It depends on NAD(+) as a cofactor.

Its subcellular location is the cytoplasm. It carries out the reaction S-adenosyl-L-homocysteine + H2O = L-homocysteine + adenosine. Its pathway is amino-acid biosynthesis; L-homocysteine biosynthesis; L-homocysteine from S-adenosyl-L-homocysteine: step 1/1. May play a key role in the regulation of the intracellular concentration of adenosylhomocysteine. In Nitrosomonas eutropha (strain DSM 101675 / C91 / Nm57), this protein is Adenosylhomocysteinase.